A 258-amino-acid chain; its full sequence is TLC domain-containing protein 4-A (258 aa).

Helical transmembrane passes span 5-25, 52-72, 85-105, 116-132, 171-191, and 212-232; these read LISY…FSAI, FVST…LAYD, FWVK…LLLL, YMVC…GYVL, PVLL…IAVI, and IGPQ…NVFW. The TLC domain maps to 43-245; that stretch reads GKQCEWDSRF…IARGFYKVVK (203 aa).

The protein belongs to the TLCD4 family.

Its subcellular location is the membrane. In Xenopus laevis (African clawed frog), this protein is TLC domain-containing protein 4-A (tlcd4-a).